A 101-amino-acid polypeptide reads, in one-letter code: Large ribosomal subunit protein uL24 (101 aa).

It belongs to the universal ribosomal protein uL24 family. In terms of assembly, part of the 50S ribosomal subunit.

Its function is as follows. One of two assembly initiator proteins, it binds directly to the 5'-end of the 23S rRNA, where it nucleates assembly of the 50S subunit. One of the proteins that surrounds the polypeptide exit tunnel on the outside of the subunit. The protein is Large ribosomal subunit protein uL24 of Streptococcus thermophilus (strain ATCC BAA-491 / LMD-9).